We begin with the raw amino-acid sequence, 435 residues long: MNQQTVNVIGAGLAGSEAAWQLAKRGIQVKLYEMRPVKQTPAHHTDKFAELVCSNSLRSNTLANAVGVLKEEMRALDSAIIAAADECSVPAGGALAVDRHEFAASVTNRVKNHPNVTVINEEVTEIPEGPTIIATGPLTSESLSAQLKELTGEDYLYFYDAAAPIVEKDSLDMDKVYLKSRYDKGEAAYLNCPMTEEEFDRFHEALTSAETVPLKEFEKEIFFEGCMPIEVMAKRGKKTMLFGPMKPVGLEHPVTGKRPYAVVQLRQDDAAGTLYNIVGFQTHLKWGDQKEVLKLIPGLENVEIVRYGVMHRNTFINSPSLLKPTYQFKNRSDLFFAGQMTGVEGYVESAASGLVAGINAAKLVLGEELVIFPQETAIGSMAHYITTTNQKNFQPMNANFGLLKELPVKIKNKKERNEQYANRAIETIQTISKTI.

Residue 10–15 participates in FAD binding; that stretch reads GAGLAG.

This sequence belongs to the MnmG family. TrmFO subfamily. Homodimer. Requires FAD as cofactor.

It localises to the cytoplasm. It catalyses the reaction uridine(54) in tRNA + (6R)-5,10-methylene-5,6,7,8-tetrahydrofolate + NADH + H(+) = 5-methyluridine(54) in tRNA + (6S)-5,6,7,8-tetrahydrofolate + NAD(+). It carries out the reaction uridine(54) in tRNA + (6R)-5,10-methylene-5,6,7,8-tetrahydrofolate + NADPH + H(+) = 5-methyluridine(54) in tRNA + (6S)-5,6,7,8-tetrahydrofolate + NADP(+). Its function is as follows. Catalyzes the folate-dependent formation of 5-methyl-uridine at position 54 (M-5-U54) in all tRNAs. The protein is Methylenetetrahydrofolate--tRNA-(uracil-5-)-methyltransferase TrmFO of Bacillus subtilis (strain 168).